The following is a 186-amino-acid chain: uncharacterized protein (186 aa).

3 consecutive transmembrane segments (helical) span residues Ile42–Leu62, Leu80–Val100, and Ile131–Leu151.

It to U.parvum UU008, UU041 and UU042.

Its subcellular location is the cell membrane. This is an uncharacterized protein from Ureaplasma parvum serovar 3 (strain ATCC 700970).